We begin with the raw amino-acid sequence, 291 residues long: ATP synthase gamma chain (291 aa).

This sequence belongs to the ATPase gamma chain family. As to quaternary structure, F-type ATPases have 2 components, CF(1) - the catalytic core - and CF(0) - the membrane proton channel. CF(1) has five subunits: alpha(3), beta(3), gamma(1), delta(1), epsilon(1). CF(0) has three main subunits: a, b and c.

It localises to the cell inner membrane. Produces ATP from ADP in the presence of a proton gradient across the membrane. The gamma chain is believed to be important in regulating ATPase activity and the flow of protons through the CF(0) complex. This is ATP synthase gamma chain from Rhodopseudomonas palustris (strain ATCC BAA-98 / CGA009).